A 64-amino-acid chain; its full sequence is Large ribosomal subunit protein bL32 (64 aa).

Belongs to the bacterial ribosomal protein bL32 family.

This is Large ribosomal subunit protein bL32 from Flavobacterium psychrophilum (strain ATCC 49511 / DSM 21280 / CIP 103535 / JIP02/86).